A 502-amino-acid polypeptide reads, in one-letter code: L-arabinose isomerase (502 aa).

Mn(2+)-binding residues include glutamate 307, glutamate 334, histidine 351, and histidine 450.

This sequence belongs to the arabinose isomerase family. It depends on Mn(2+) as a cofactor.

It carries out the reaction beta-L-arabinopyranose = L-ribulose. The protein operates within carbohydrate degradation; L-arabinose degradation via L-ribulose; D-xylulose 5-phosphate from L-arabinose (bacterial route): step 1/3. Its function is as follows. Catalyzes the conversion of L-arabinose to L-ribulose. This Nocardioides sp. (strain ATCC BAA-499 / JS614) protein is L-arabinose isomerase.